We begin with the raw amino-acid sequence, 153 residues long: Transcription antitermination protein NusB (153 aa).

This sequence belongs to the NusB family.

Its function is as follows. Involved in transcription antitermination. Required for transcription of ribosomal RNA (rRNA) genes. Binds specifically to the boxA antiterminator sequence of the ribosomal RNA (rrn) operons. The chain is Transcription antitermination protein NusB from Symbiobacterium thermophilum (strain DSM 24528 / JCM 14929 / IAM 14863 / T).